Reading from the N-terminus, the 331-residue chain is Cilia- and flagella-associated protein 119 (331 aa).

S34 bears the Phosphoserine mark. Disordered regions lie at residues 236 to 271 and 309 to 331; these read LWPE…PEPE and SSKL…SKTK. Residues 286 to 317 adopt a coiled-coil conformation; the sequence is VNKELEQLQGLVEERLKASEERLSSKLTALER.

It is found in the cell projection. Its subcellular location is the cilium. The protein localises to the flagellum. The protein resides in the cytoplasmic vesicle. It localises to the secretory vesicle. It is found in the acrosome. Its subcellular location is the cytoplasm. The chain is Cilia- and flagella-associated protein 119 from Homo sapiens (Human).